The primary structure comprises 342 residues: Oxygen-dependent coproporphyrinogen-III oxidase (342 aa).

A substrate-binding site is contributed by serine 98. A divalent metal cation contacts are provided by histidine 102 and histidine 112. Histidine 112 (proton donor) is an active-site residue. Asparagine 114 to arginine 116 is a substrate binding site. A divalent metal cation contacts are provided by histidine 146 and histidine 176. The interval tyrosine 266–glutamate 301 is important for dimerization.

This sequence belongs to the aerobic coproporphyrinogen-III oxidase family. As to quaternary structure, homodimer. The cofactor is a divalent metal cation.

Its subcellular location is the cytoplasm. It catalyses the reaction coproporphyrinogen III + O2 + 2 H(+) = protoporphyrinogen IX + 2 CO2 + 2 H2O. It functions in the pathway porphyrin-containing compound metabolism; protoporphyrin-IX biosynthesis; protoporphyrinogen-IX from coproporphyrinogen-III (O2 route): step 1/1. In terms of biological role, involved in the heme and chlorophyll biosynthesis. Catalyzes the aerobic oxidative decarboxylation of propionate groups of rings A and B of coproporphyrinogen-III to yield the vinyl groups in protoporphyrinogen-IX. The polypeptide is Oxygen-dependent coproporphyrinogen-III oxidase (Prochlorococcus marinus (strain MIT 9312)).